A 306-amino-acid polypeptide reads, in one-letter code: Ubiquitin-conjugating enzyme E2Q-like protein CG4502 (306 aa).

Residues 18–77 form a disordered region; sequence HKSSNNNNNNNNNHNNNINNNNNNDKVDGATGSSPNINNNNNNNNNNNNHDGAAAPSSAG. 2 stretches are compositionally biased toward low complexity: residues 22–41 and 53–77; these read NNNN…NNNN and NINN…SSAG. One can recognise a UBC core domain in the interval 138 to 299; that stretch reads IRTRRLMKEY…VKTHEKYGWV (162 aa). The active-site Glycyl thioester intermediate is cysteine 234.

It belongs to the ubiquitin-conjugating enzyme family.

The enzyme catalyses S-ubiquitinyl-[E1 ubiquitin-activating enzyme]-L-cysteine + [E2 ubiquitin-conjugating enzyme]-L-cysteine = [E1 ubiquitin-activating enzyme]-L-cysteine + S-ubiquitinyl-[E2 ubiquitin-conjugating enzyme]-L-cysteine.. It functions in the pathway protein modification; protein ubiquitination. Catalyzes the covalent attachment of ubiquitin to other proteins. This chain is Ubiquitin-conjugating enzyme E2Q-like protein CG4502, found in Drosophila melanogaster (Fruit fly).